We begin with the raw amino-acid sequence, 277 residues long: 3-methyl-2-oxobutanoate hydroxymethyltransferase (277 aa).

Residues Asp-54 and Asp-93 each coordinate Mg(2+). 3-methyl-2-oxobutanoate-binding positions include 54–55, Asp-93, and Lys-122; that span reads DS. Residue Glu-124 participates in Mg(2+) binding. Residue Glu-191 is the Proton acceptor of the active site.

The protein belongs to the PanB family. In terms of assembly, homodecamer; pentamer of dimers. The cofactor is Mg(2+).

The protein localises to the cytoplasm. It carries out the reaction 3-methyl-2-oxobutanoate + (6R)-5,10-methylene-5,6,7,8-tetrahydrofolate + H2O = 2-dehydropantoate + (6S)-5,6,7,8-tetrahydrofolate. It participates in cofactor biosynthesis; (R)-pantothenate biosynthesis; (R)-pantoate from 3-methyl-2-oxobutanoate: step 1/2. In terms of biological role, catalyzes the reversible reaction in which hydroxymethyl group from 5,10-methylenetetrahydrofolate is transferred onto alpha-ketoisovalerate to form ketopantoate. The protein is 3-methyl-2-oxobutanoate hydroxymethyltransferase of Alkalilimnicola ehrlichii (strain ATCC BAA-1101 / DSM 17681 / MLHE-1).